The primary structure comprises 574 residues: Desiccation/radiation resistance protein DR_1769 (574 aa).

A signal peptide spans 1–33 (MPDPAARRFSLPPFPLAALALSVALLGAPASLA). Residues 400–438 (TAQTQARQAAAAASTSQQPRLPTLAQAPAPTPAPAQTTP) are compositionally biased toward low complexity. Residues 400 to 461 (TAQTQARQAA…APVPPVASPA (62 aa)) form a disordered region. The segment covering 439–459 (RPQPTPAQPATPAAPVPPVAS) has biased composition (pro residues).

Its function is as follows. Plays an important role in resistance to desiccation and radiation, maybe by protecting genome integrity under extreme conditions. The sequence is that of Desiccation/radiation resistance protein DR_1769 from Deinococcus radiodurans (strain ATCC 13939 / DSM 20539 / JCM 16871 / CCUG 27074 / LMG 4051 / NBRC 15346 / NCIMB 9279 / VKM B-1422 / R1).